Here is a 155-residue protein sequence, read N- to C-terminus: 3-hydroxyacyl-[acyl-carrier-protein] dehydratase FabZ (155 aa).

The active site involves His-58.

This sequence belongs to the thioester dehydratase family. FabZ subfamily.

It is found in the cytoplasm. It catalyses the reaction a (3R)-hydroxyacyl-[ACP] = a (2E)-enoyl-[ACP] + H2O. Its function is as follows. Involved in unsaturated fatty acids biosynthesis. Catalyzes the dehydration of short chain beta-hydroxyacyl-ACPs and long chain saturated and unsaturated beta-hydroxyacyl-ACPs. The sequence is that of 3-hydroxyacyl-[acyl-carrier-protein] dehydratase FabZ from Alkalilimnicola ehrlichii (strain ATCC BAA-1101 / DSM 17681 / MLHE-1).